The following is a 75-amino-acid chain: Small ribosomal subunit protein bS18 (75 aa).

The protein belongs to the bacterial ribosomal protein bS18 family. As to quaternary structure, part of the 30S ribosomal subunit. Forms a tight heterodimer with protein bS6.

In terms of biological role, binds as a heterodimer with protein bS6 to the central domain of the 16S rRNA, where it helps stabilize the platform of the 30S subunit. The chain is Small ribosomal subunit protein bS18 from Photobacterium profundum (strain SS9).